The chain runs to 72 residues: UPF0154 protein BLi02038/BL02936 (72 aa).

Residues 4–24 (WVVILVGVLALLAGVALGFFI) form a helical membrane-spanning segment.

Belongs to the UPF0154 family.

The protein localises to the cell membrane. This chain is UPF0154 protein BLi02038/BL02936, found in Bacillus licheniformis (strain ATCC 14580 / DSM 13 / JCM 2505 / CCUG 7422 / NBRC 12200 / NCIMB 9375 / NCTC 10341 / NRRL NRS-1264 / Gibson 46).